The primary structure comprises 55 residues: Protein CADMIUM TOLERANCE 2 (55 aa).

Residues G24–Y40 form a helical membrane-spanning segment.

The protein belongs to the CYSTM1 family. In terms of tissue distribution, expressed only in roots.

It localises to the cell membrane. It is found in the secreted. The protein localises to the cell wall. In terms of biological role, confers resistance to heavy metal ions (e.g. cadmium (CdCl(2)) and copper (CuCl(2))) by chelating them at the plasma membrane of root cells, thus stopping their entry and reducing their accumulation. This Oryza sativa subsp. japonica (Rice) protein is Protein CADMIUM TOLERANCE 2.